A 122-amino-acid polypeptide reads, in one-letter code: Large ribosomal subunit protein uL18 (122 aa).

It belongs to the universal ribosomal protein uL18 family. As to quaternary structure, part of the 50S ribosomal subunit; part of the 5S rRNA/L5/L18/L25 subcomplex. Contacts the 5S and 23S rRNAs.

In terms of biological role, this is one of the proteins that bind and probably mediate the attachment of the 5S RNA into the large ribosomal subunit, where it forms part of the central protuberance. This is Large ribosomal subunit protein uL18 from Desulfitobacterium hafniense (strain Y51).